The following is a 250-amino-acid chain: Histone H1.1 (250 aa).

Residues M1–S11 show a composition bias toward polar residues. 2 disordered regions span residues M1–V52 and Q104–K250. Positions S44 to A118 constitute an H15 domain. The segment covering K122 to K133 has biased composition (basic and acidic residues). A compositionally biased stretch (low complexity) spans A140–A161. Residues K174–K191 show a composition bias toward basic and acidic residues. The span at T192 to K234 shows a compositional bias: low complexity. Residues T235–K250 are compositionally biased toward basic residues.

It belongs to the histone H1/H5 family.

The protein localises to the nucleus. Its subcellular location is the chromosome. In terms of biological role, histones H1 are necessary for the condensation of nucleosome chains into higher-order structures. The chain is Histone H1.1 (His1.1) from Drosophila virilis (Fruit fly).